A 163-amino-acid chain; its full sequence is Pheromone-binding protein (163 aa).

A signal peptide spans 1 to 21 (MLRKISLLLLPVFVAINLVHS). 3 cysteine pairs are disulfide-bonded: cysteine 40-cysteine 75, cysteine 71-cysteine 129, and cysteine 118-cysteine 138.

Belongs to the PBP/GOBP family. Homodimer. As to expression, antenna.

In terms of biological role, this major soluble protein in olfactory sensilla of male moths might serve to solubilize the extremely hydrophobic pheromone molecules and to transport pheromone through the aqueous lymph to receptors located on olfactory cilia. The chain is Pheromone-binding protein from Antheraea polyphemus (Polyphemus moth).